A 103-amino-acid chain; its full sequence is N(4)-acetylcytidine amidohydrolase (103 aa).

The region spanning 6-94 (ITFFQRFQND…IAEIYPNQTQ (89 aa)) is the ASCH domain. Lys-21 (proton acceptor) is an active-site residue. Catalysis depends on Thr-24, which acts as the Nucleophile. Catalysis depends on Glu-74, which acts as the Proton donor.

Belongs to the N(4)-acetylcytidine amidohydrolase family.

It carries out the reaction N(4)-acetylcytidine + H2O = cytidine + acetate + H(+). The enzyme catalyses N(4)-acetyl-2'-deoxycytidine + H2O = 2'-deoxycytidine + acetate + H(+). It catalyses the reaction N(4)-acetylcytosine + H2O = cytosine + acetate + H(+). Catalyzes the hydrolysis of N(4)-acetylcytidine (ac4C). This is N(4)-acetylcytidine amidohydrolase (yqfB) from Salmonella schwarzengrund (strain CVM19633).